A 744-amino-acid polypeptide reads, in one-letter code: Prestin (744 aa).

The Cytoplasmic portion of the chain corresponds to 1-79 (MDHAEENEIP…WLPAYKFKEY (79 aa)). A helical membrane pass occupies residues 80–105 (VLGDLVSGISTGVLQLPQGLAFAMLA). Residues 106-109 (AVPP) lie on the Extracellular side of the membrane. Residues 110–125 (VFGLYSSFYPVIMYCF) form a helical membrane-spanning segment. At 126-137 (FGTSRHISIGPF) the chain is on the cytoplasmic side. A helical membrane pass occupies residues 138 to 147 (AVISLMIGGV). The Extracellular portion of the chain corresponds to 148 to 178 (AVRLVPDDIVIPGGVNATNGTEARDALRVKV). The short motif at 158–168 (IPGGVNATNGT) is the Involved in motor function element. 2 N-linked (GlcNAc...) asparagine glycosylation sites follow: Asn-163 and Asn-166. A helical membrane pass occupies residues 179–196 (AMSVTLLSGIIQFCLGVC). The Cytoplasmic portion of the chain corresponds to 197-208 (RFGFVAIYLTEP). A helical transmembrane segment spans residues 209–230 (LVRGFTTAAAVHVFTSMLKYLF). Over 231-243 (GVKTKRYSGIFSV) the chain is Extracellular. The helical intramembrane region spans 244–252 (VYSTVAVLQ). The Extracellular portion of the chain corresponds to 253-258 (NVKNLN). Residues 259–282 (VCSLGVGLMVFGLLLGGKEFNERF) form a helical membrane-spanning segment. Residues 283 to 291 (KEKLPAPIP) lie on the Cytoplasmic side of the membrane. Residues 292-304 (LEFFAVVMGTGIS) form a helical membrane-spanning segment. The Extracellular segment spans residues 305-337 (AGFNLHESYSVDVVGTLPLGLLPPANPDTSLFH). A helical transmembrane segment spans residues 338 to 361 (LVYVDAIAIAIVGFSVTISMAKTL). The Cytoplasmic portion of the chain corresponds to 362 to 370 (ANKHGYQVD). Residues 371-388 (GNQELIALGICNSIGSLF) traverse the membrane as a helical segment. At 389-396 (QTFSISCS) the chain is on the extracellular side. Residues 397–406 (LSRSLVQEGT) traverse the membrane as a helical segment. Ser-398 contacts salicylate. The Cytoplasmic portion of the chain corresponds to 407–410 (GGKT). Residues 411–429 (QLAGCLASLMILLVILATG) traverse the membrane as a helical segment. Over 430–436 (FLFESLP) the chain is Extracellular. Residues 437 to 455 (QAVLSAIVIVNLKGMFMQF) form a helical membrane-spanning segment. At 456-469 (SDLPFFWRTSKIEL) the chain is on the cytoplasmic side. The helical transmembrane segment at 470–484 (TIWLTTFVSSLFLGL) threads the bilayer. Asp-485 is a topological domain (extracellular). The chain crosses the membrane as a helical span at residues 486–497 (YGLITAVIIALL). The Cytoplasmic portion of the chain corresponds to 498–744 (TVIYRTQSPS…PNATPTTPEA (247 aa)). An extended region for STAS domain region spans residues 505 to 718 (SPSYKVLGQL…AVLGSHVREA (214 aa)). The STAS domain occupies 525–713 (AYEEVKEIPG…HSIHDAVLGS (189 aa)). The tract at residues 717–744 (EAMAEQEASAPPPQDDMEPNATPTTPEA) is disordered.

The protein belongs to the SLC26A/SulP transporter (TC 2.A.53) family. As to quaternary structure, homodimer. Interacts (via STAS domain) with CALM; this interaction is calcium-dependent and the STAS domain interacts with only one lobe of CALM which is an elongated conformation. Interacts with MYH1. Highly expressed in mature outer hair cells, but not in inner hair cells or other cells of the basilar membrane and the organ of Corti.

It localises to the lateral cell membrane. It catalyses the reaction 2 hydrogencarbonate(in) + chloride(out) = 2 hydrogencarbonate(out) + chloride(in). Its function is as follows. Voltage-sensitive motor protein that drives outer hair cell (OHC) electromotility (eM) and participates in sound amplification in the hearing organ. Converts changes in the transmembrane electric potential into mechanical displacements resulting in the coupling of its expansion to movement of a charged voltage sensor across the lipid membrane. The nature of the voltage sensor is not completely clear, and two models compete. In the first model, acts as an incomplete transporter where intracellular chloride anion acts as extrinsic voltage sensor that drives conformational change in the protein which is sufficient to produce a length change in the plane of the membrane and hence in the length of the OHC. The second model in which multiple charged amino acid residues are distributed at the intracellular and extracellular membrane interfaces that form an intrinsic voltage sensor, whose movement produces the non-linear capacitance (NLC). However, the effective voltage sensor may be the result of a hybrid voltage sensor assembled from intrinsic charge (charged residues) and extrinsic charge (bound anion). Notably, binding of anions to the anion-binding pocket partially neutralizes the intrinsic positive charge rather than to form an electrically negative sensor, therefore remaining charge may serve as voltage sensor that, after depolarization, moves from down (expanded state) to up (contracted) conformation, which is accompanied by an eccentric contraction of the intermembrane cross-sectional area of the protein as well as a major increase in the hydrophobic thickness of the protein having as consequences the plasma membrane thickening and the cell contraction after membrane depolarization. The anion-binding pocket transits from the inward-open (Down) state, where it is exposed toward the intracellular solvent in the absence of anion, to the occluded (Up) state upon anion binding. Salicylate competes for the anion-binding site and inhibits the voltage-sensor movement, and therefore inhibits the charge transfer and electromotility by displacing Cl(-) from the anion-binding site and by preventing the structural transitions to the contracted state. In addition, can act as a weak Cl(-)/HCO3 (-) antiporter across the cell membrane and so regulate the intracellular pH of the outer hair cells (OHCs), while firstly found as being unable to mediate electrogenic anion transport. Moreover, supports a role in cardiac mechanical amplification serving as an elastic element to enhance the actomyosin- based sarcomere contraction system. This is Prestin from Meriones unguiculatus (Mongolian jird).